A 390-amino-acid polypeptide reads, in one-letter code: Putative methylesterase 11, chloroplastic (390 aa).

The transit peptide at 1–46 (MGNLCSLFTPPKPVKKRKPITKRQSSIGASSSGSGLNSNRWNNRVR) directs the protein to the chloroplast. Disordered stretches follow at residues 1-52 (MGNL…SSRR) and 94-119 (QGSC…DPLL). Positions 25-48 (SSIGASSSGSGLNSNRWNNRVRSS) are enriched in low complexity. Over residues 94–104 (QGSCSKKNQLP) the composition is skewed to polar residues. Over residues 105–114 (RSSSSRSRSS) the composition is skewed to low complexity. The 105-residue stretch at 137-241 (NHFVLVHGGS…KAVFLAAAML (105 aa)) folds into the AB hydrolase-1 domain. Asp-213 functions as the Acyl-ester intermediate in the catalytic mechanism. Active-site charge relay system residues include Asp-339 and His-367.

Belongs to the AB hydrolase superfamily. Methylesterase family.

Its subcellular location is the plastid. It localises to the chloroplast. In terms of biological role, putative methylesterase. This is Putative methylesterase 11, chloroplastic from Arabidopsis thaliana (Mouse-ear cress).